The chain runs to 484 residues: Transcription factor MYB88 (484 aa).

A disordered region spans residues 1–20; it reads MEETTKQNNMKKKKKILLHS. Positions 13–20 match the Nuclear localization signal motif; it reads KKKILLHS. HTH myb-type domains follow at residues 25–76 and 77–131; these read KKER…YTYL and NSDF…KKRA. 2 consecutive DNA-binding regions (H-T-H motif) follow at residues 53–76 and 104–127; these read WAII…YTYL and WTEI…TTLC. Disordered stretches follow at residues 215-241, 321-383, and 458-484; these read NATS…DKSN, RSSN…GGEL, and GVES…LDSL. Positions 232-241 are enriched in basic and acidic residues; it reads KESDGEDKSN. Positions 339–348 are enriched in low complexity; that stretch reads SPASSEYSSG. The span at 354–380 shows a compositional bias: polar residues; that stretch reads TIMTHPSGDKTQQLMSDTQTTSHQQNG. Over residues 463-476 the composition is skewed to pro residues; it reads SPYPSANPSQPPPC.

Interacts with RBR1. As to expression, expressed at low levels in all organs including roots, leaves, hypocotyls stems, flowers, siliques and buds.

Its subcellular location is the nucleus. In terms of biological role, transcription factor that binds to DNA in promoters cis-regulatory element 5'-GGCGCGC-3' of cell cycle genes, including cyclins, cyclin-dependent kinases (CDKs), and components of the pre-replication complex. Binds to DNA in promoters cis-regulatory element 5'-AGCCG-3' of auxin regulated genes (e.g. PIN3 and PIN7). Together with FAMA and MYB124, ensures that stomata contain just two guard cells (GCs) by enforcing a single symmetric precursor cell division before stomatal maturity. Represses the expression of the mitosis-inducing factors CDKB1-1 and CDKA-1, specifically required for the last guard mother cells (GMC) symmetric divisions in the stomatal pathway. Represses CYCA2-3 in newly formed guard cells. Together with MYB88, regulates stomata spacing by restricting divisions late in the stomatal cell lineage thus limiting the number of GMC divisions. In collaboration with CDKB1-1 and CDKB1-2, restrict the G1/S transition and chloroplast and nuclear number during stomatal formation, and normally maintain fate and developmental progression throughout the stomatal cell lineage. Involved in sensing and/or transducing abiotic stress (e.g. drought and salt), probably via the positive regulation of NAC019. Regulates female reproduction being required for entry into megasporogenesis, probably via the regulation of cell cycle genes. Plays a minor role in lateral roots (LRs) initiation. Involved complementarily in establishing the gravitropic set-point angles of lateral roots by regulating the transcription of PIN3 and PIN7 in gravity-sensing cells of primary and lateral roots. The protein is Transcription factor MYB88 of Arabidopsis thaliana (Mouse-ear cress).